The following is an 881-amino-acid chain: Sodium/sulfate cotransporter 1 (881 aa).

The next 6 membrane-spanning stretches (helical) occupy residues 8–28, 31–51, 61–81, 107–127, 140–160, and 186–206; these read GIVA…DWVG, ITFT…VTVA, GLLT…TGGL, MVLS…PILI, LLIP…IGTS, and IFDI…FILL. 4 RCK C-terminal domains span residues 212–296, 318–402, 407–492, and 498–584; these read LPGN…EYGL, VFSA…IKTN, LHAV…FPGL, and EQVD…DKSF. 6 consecutive transmembrane segments (helical) span residues 601-621, 625-645, 658-678, 684-704, 775-795, and 803-823; these read MIIG…GGLK, YIHL…TGCM, VYLT…TGVA, AIIS…AIYI, FAIV…FILV, and VWIV…LYFL. Positions 854 to 881 are disordered; sequence SLRRQVSHTRTDDSGSSGSPLPAPKIVA.

The protein belongs to the divalent anion:Na+ symporter (DASS) superfamily. Na+/sulfate symporter (TC 2.A.47.4) family.

Its subcellular location is the cell membrane. Its function is as follows. Na(+)/sulfate cotransporter with a probable high-affinity for sulfate and a proteasome dependent turnover. The sequence is that of Sodium/sulfate cotransporter 1 (SLT1) from Chlamydomonas reinhardtii (Chlamydomonas smithii).